The sequence spans 337 residues: Dolichyl-phosphate beta-glucosyltransferase ALG5C (337 aa).

Residues 1-6 (MNDLPP) are Lumenal-facing. The helical transmembrane segment at 7–27 (IANLISNILFVLLIITFLYAL) threads the bilayer. Residues 28–337 (CSRFVSDKTL…ADTPISDFEV (310 aa)) are Cytoplasmic-facing.

This sequence belongs to the glycosyltransferase 2 family.

The protein resides in the endoplasmic reticulum membrane. It catalyses the reaction a di-trans,poly-cis-dolichyl phosphate + UDP-alpha-D-glucose = a di-trans,poly-cis-dolichyl beta-D-glucosyl phosphate + UDP. Its pathway is protein modification; protein glycosylation. Functionally, dolichyl-phosphate beta-glucosyltransferase involved in the glycosylation of glycoproteins through the synthesis of dolichyl beta-D-glucosyl phosphate which serves as a sugar donor for transfer of three glucose residues to the Man-9-GlcNAc-2-PP-dolichol precursor to N-glycans. The protein is Dolichyl-phosphate beta-glucosyltransferase ALG5C of Trichomonas vaginalis (strain ATCC PRA-98 / G3).